Here is a 383-residue protein sequence, read N- to C-terminus: Putative glutamate--cysteine ligase 2 (383 aa).

It belongs to the glutamate--cysteine ligase type 2 family. YbdK subfamily.

The enzyme catalyses L-cysteine + L-glutamate + ATP = gamma-L-glutamyl-L-cysteine + ADP + phosphate + H(+). ATP-dependent carboxylate-amine ligase which exhibits weak glutamate--cysteine ligase activity. The polypeptide is Putative glutamate--cysteine ligase 2 (Clavibacter michiganensis subsp. michiganensis (strain NCPPB 382)).